The chain runs to 274 residues: NADPH-dependent 7-cyano-7-deazaguanine reductase (274 aa).

80–82 (VES) lines the substrate pocket. 82–83 (SK) lines the NADPH pocket. The active-site Thioimide intermediate is the Cys181. Catalysis depends on Asp188, which acts as the Proton donor. 220–221 (HE) is a binding site for substrate. Residue 249 to 250 (RG) coordinates NADPH.

Belongs to the GTP cyclohydrolase I family. QueF type 2 subfamily. As to quaternary structure, homodimer.

It is found in the cytoplasm. It carries out the reaction 7-aminomethyl-7-carbaguanine + 2 NADP(+) = 7-cyano-7-deazaguanine + 2 NADPH + 3 H(+). Its pathway is tRNA modification; tRNA-queuosine biosynthesis. Catalyzes the NADPH-dependent reduction of 7-cyano-7-deazaguanine (preQ0) to 7-aminomethyl-7-deazaguanine (preQ1). The protein is NADPH-dependent 7-cyano-7-deazaguanine reductase of Burkholderia mallei (strain NCTC 10247).